We begin with the raw amino-acid sequence, 414 residues long: Gamma-glutamyl phosphate reductase (414 aa).

It belongs to the gamma-glutamyl phosphate reductase family.

Its subcellular location is the cytoplasm. It catalyses the reaction L-glutamate 5-semialdehyde + phosphate + NADP(+) = L-glutamyl 5-phosphate + NADPH + H(+). It functions in the pathway amino-acid biosynthesis; L-proline biosynthesis; L-glutamate 5-semialdehyde from L-glutamate: step 2/2. In terms of biological role, catalyzes the NADPH-dependent reduction of L-glutamate 5-phosphate into L-glutamate 5-semialdehyde and phosphate. The product spontaneously undergoes cyclization to form 1-pyrroline-5-carboxylate. The chain is Gamma-glutamyl phosphate reductase from Xanthomonas axonopodis pv. citri (strain 306).